A 730-amino-acid polypeptide reads, in one-letter code: Matrix metalloproteinase-9 (730 aa).

Residues 1–19 form the signal peptide; sequence MSPWQPLLLALLAFGCSSA. The propeptide at 20–107 is activation peptide; it reads APYQRQPTFV…PRCGVPDVGR (88 aa). An N-linked (GlcNAc...) asparagine glycan is attached at N39. A Cysteine switch motif is present at residues 98–105; that stretch reads PRCGVPDV. A Zn(2+)-binding site is contributed by C100. N-linked (GlcNAc...) asparagine glycosylation is found at N120 and N127. Ca(2+) is bound by residues D131 and D165. The Zn(2+) site is built by H175 and D177. 4 residues coordinate Ca(2+): D182, G183, D185, and L187. Zn(2+) is bound at residue H190. G197, Q199, and D201 together coordinate Ca(2+). H203 lines the Zn(2+) pocket. 3 residues coordinate Ca(2+): D205, D206, and E208. 3 consecutive Fibronectin type-II domains span residues 225-273, 283-331, and 342-390; these read SNGA…FCPS, GEGK…FCPT, and SAGE…FCPD. Intrachain disulfides connect C230–C256, C244–C271, C288–C314, C302–C329, C347–C373, and C361–C388. A Zn(2+)-binding site is contributed by H401. Residue E402 is part of the active site. Residues H405 and H411 each coordinate Zn(2+). The tract at residues 442–529 is disordered; it reads LYGRGSKPDP…SEASTESLSP (88 aa). The span at 463-477 shows a compositional bias: pro residues; sequence PTAPPTMCPTIPPTA. A compositionally biased stretch (low complexity) spans 478–489; that stretch reads YPTVGPTVGPTG. Pro residues predominate over residues 490 to 514; the sequence is APSPGPTSSPSPGPTGAPSPGPTAP. Cysteines 534 and 729 form a disulfide. Hemopexin repeat units follow at residues 536 to 581, 582 to 626, 628 to 675, and 676 to 729; these read VDVF…WPAL, PATL…GLGP, VTHV…FSGV, and PWNS…LLQC.

This sequence belongs to the peptidase M10A family. Exists as monomer or homodimer; disulfide-linked. Also exists as heterodimer with LCN2. Macrophages and transformed cell lines produce only the monomeric form. Interacts with ECM1. It depends on Zn(2+) as a cofactor. Ca(2+) is required as a cofactor. Post-translationally, N- and O-glycosylated.

The protein localises to the secreted. It localises to the extracellular space. It is found in the extracellular matrix. The catalysed reaction is Cleavage of gelatin types I and V and collagen types IV and V.. Its activity is regulated as follows. Inhibited by histatin-3 1/24 (histatin-5). Inhibited by ECM1. In terms of biological role, matrix metalloproteinase that plays an essential role in local proteolysis of the extracellular matrix and in leukocyte migration. Could play a role in bone osteoclastic resorption. Cleaves KiSS1 at a Gly-|-Leu bond. Cleaves NINJ1 to generate the Secreted ninjurin-1 form. Cleaves type IV and type V collagen into large C-terminal three quarter fragments and shorter N-terminal one quarter fragments. Degrades fibronectin but not laminin or Pz-peptide. The chain is Matrix metalloproteinase-9 (Mmp9) from Mus musculus (Mouse).